The primary structure comprises 2531 residues: Highly reducing polyketide synthase ausV (2531 aa).

The Ketosynthase family 3 (KS3) domain occupies 7-432 (STPIAIIGLS…GTNAHCVMET (426 aa)). Catalysis depends on for beta-ketoacyl synthase activity residues Cys180, His315, and His355. The tract at residues 554–882 (FVFTGQGAQW…HHTLLESMGS (329 aa)) is malonyl-CoA:ACP transacylase (MAT) domain. Catalysis depends on Ser644, which acts as the For malonyltransferase activity. The segment at 939 to 1069 (HDLCGIRVED…GSVLAGTPSD (131 aa)) is N-terminal hotdog fold. A PKS/mFAS DH domain is found at 939-1238 (HDLCGIRVED…LATLSVRSGD (300 aa)). The segment at 940–1236 (DLCGIRVEDD…LELATLSVRS (297 aa)) is dehydratase (DH) domain. His971 serves as the catalytic Proton acceptor; for dehydratase activity. The segment at 1087–1238 (YVETTPRQAY…LATLSVRSGD (152 aa)) is C-terminal hotdog fold. Asp1152 functions as the Proton donor; for dehydratase activity in the catalytic mechanism. The tract at residues 1414 to 1592 (SSYLRLHARN…DTGFSGVDIS (179 aa)) is methyltransferase (CMet) domain. The tract at residues 1832–2133 (LRFVQDPAYW…SGGAKPGCSR (302 aa)) is enoyl reductase (ER) domain. Residues 2156 to 2331 (HGRALVPDFH…AGVSLSLGFI (176 aa)) are ketoreductase (KR) domain. One can recognise a Carrier domain in the interval 2444–2521 (AAATAVLDAL…ELARDLALRS (78 aa)). O-(pantetheine 4'-phosphoryl)serine is present on Ser2481.

It participates in secondary metabolite biosynthesis; terpenoid biosynthesis. In terms of biological role, highly reducing polyketide synthase; part of the gene cluster that mediates the biosynthesis of calidodehydroaustin, a fungal meroterpenoid. The first step of the pathway is the synthesis of 3,5-dimethylorsellinic acid by the polyketide synthase ausA. 3,5-dimethylorsellinic acid is then prenylated by the polyprenyl transferase ausN. Further epoxidation by the FAD-dependent monooxygenase ausM and cyclization by the probable terpene cyclase ausL lead to the formation of protoaustinoid A. Protoaustinoid A is then oxidized to spiro-lactone preaustinoid A3 by the combined action of the FAD-binding monooxygenases ausB and ausC, and the dioxygenase ausE. Acid-catalyzed keto-rearrangement and ring contraction of the tetraketide portion of preaustinoid A3 by ausJ lead to the formation of preaustinoid A4. The aldo-keto reductase ausK, with the help of ausH, is involved in the next step by transforming preaustinoid A4 into isoaustinone which is in turn hydroxylated by the P450 monooxygenase ausI to form austinolide. The cytochrome P450 monooxygenase ausG modifies austinolide to austinol. Austinol is further acetylated to austin by the O-acetyltransferase ausP, which spontaneously changes to dehydroaustin. The cytochrome P450 monooxygenase ausR then converts dehydroaustin is into 7-dehydrodehydroaustin. The hydroxylation catalyzed by ausR permits the O-acetyltransferase ausQ to add an additional acetyl group to the molecule, leading to the formation of acetoxydehydroaustin. The short chain dehydrogenase ausT catalyzes the reduction of the double bond present between carbon atoms 1 and 2 to convert 7-dehydrodehydroaustin into 1,2-dihydro-7-hydroxydehydroaustin. AusQ catalyzes not only an acetylation reaction but also the addition of the PKS ausV diketide product to 1,2-dihydro-7-hydroxydehydroaustin, forming precalidodehydroaustin. Finally, the iron/alpha-ketoglutarate-dependent dioxygenase converts precalidodehydroaustin into calidodehydroaustin. In Aspergillus calidoustus, this protein is Highly reducing polyketide synthase ausV.